Here is a 344-residue protein sequence, read N- to C-terminus: MMVIRPVERSDVSALMQLASKTGGGLTSLPANEATLSARIERAIKTWQGELPKSEQGYVFVLEDSETGTVAGICAIEVAVGLNDPWYNYRVGTLVHASKELNVYNALPTLFLSNDHTGSSELCTLFLDPDWRKEGNGYLLSKSRFMFMAAFRDKFNDKVVAEMRGVIDEHGYSPFWQSLGKRFFSMDFSRADFLCGTGQKAFIAELMPKHPIYTHFLSQEAQDVIGQVHPQTAPARAVLEKEGFRYRNYIDIFDGGPTLECDIDRVRAIRKSRLVEVAEGQPAQGDFPACLVANENYHHFRVVLVRTDPATERLILTAAQLDALKCHAGDRVRLVRLCAEEKTA.

A succinyl-CoA-binding site is contributed by L125. H229 acts as the Proton donor in catalysis.

The protein belongs to the arginine N-succinyltransferase family.

The enzyme catalyses succinyl-CoA + L-arginine = N(2)-succinyl-L-arginine + CoA + H(+). It functions in the pathway amino-acid degradation; L-arginine degradation via AST pathway; L-glutamate and succinate from L-arginine: step 1/5. In terms of biological role, catalyzes the transfer of succinyl-CoA to arginine to produce N(2)-succinylarginine. This Escherichia coli O157:H7 protein is Arginine N-succinyltransferase.